We begin with the raw amino-acid sequence, 692 residues long: Glycine--tRNA ligase beta subunit (692 aa).

This sequence belongs to the class-II aminoacyl-tRNA synthetase family. Tetramer of two alpha and two beta subunits.

Its subcellular location is the cytoplasm. The catalysed reaction is tRNA(Gly) + glycine + ATP = glycyl-tRNA(Gly) + AMP + diphosphate. This is Glycine--tRNA ligase beta subunit from Limosilactobacillus fermentum (strain NBRC 3956 / LMG 18251) (Lactobacillus fermentum).